Consider the following 479-residue polypeptide: Sulfate adenylyltransferase subunit 1 (479 aa).

The tr-type G domain occupies 25-239 (KSLLRFLTCG…EVLETVDIQR (215 aa)). The G1 stretch occupies residues 34–41 (GSVDDGKS). GTP is bound at residue 34-41 (GSVDDGKS). The tract at residues 92–96 (GITID) is G2. The tract at residues 113 to 116 (DTPG) is G3. GTP-binding positions include 113–117 (DTPGH) and 168–171 (NKMD). Positions 168–171 (NKMD) are G4. The tract at residues 206 to 208 (SAL) is G5.

The protein belongs to the TRAFAC class translation factor GTPase superfamily. Classic translation factor GTPase family. CysN/NodQ subfamily. Heterodimer composed of CysD, the smaller subunit, and CysN.

The catalysed reaction is sulfate + ATP + H(+) = adenosine 5'-phosphosulfate + diphosphate. The protein operates within sulfur metabolism; hydrogen sulfide biosynthesis; sulfite from sulfate: step 1/3. With CysD forms the ATP sulfurylase (ATPS) that catalyzes the adenylation of sulfate producing adenosine 5'-phosphosulfate (APS) and diphosphate, the first enzymatic step in sulfur assimilation pathway. APS synthesis involves the formation of a high-energy phosphoric-sulfuric acid anhydride bond driven by GTP hydrolysis by CysN coupled to ATP hydrolysis by CysD. The polypeptide is Sulfate adenylyltransferase subunit 1 (Salmonella typhimurium (strain LT2 / SGSC1412 / ATCC 700720)).